Consider the following 263-residue polypeptide: Putative aliphatic sulfonates transport permease protein SsuC (263 aa).

Residues 1–13 (MATPVKKWLLRVA) are Cytoplasmic-facing. The chain crosses the membrane as a helical span at residues 14 to 34 (PWFLPVGIVAVWQLASSVGWL). The Periplasmic segment spans residues 35-43 (STRILPSPE). Residues 44-64 (GVVTAFWTLSASGELWQHLAI) traverse the membrane as a helical segment. Residues 58–242 (LWQHLAISSW…LLGKLADVSA (185 aa)) form the ABC transmembrane type-1 domain. Over 65-68 (SSWR) the chain is Cytoplasmic. Residues 69 to 89 (ALIGFSIGGSLGLILGLISGL) traverse the membrane as a helical segment. Topologically, residues 90 to 102 (SRWGERLLDTSIQ) are periplasmic. The chain crosses the membrane as a helical span at residues 103 to 122 (MLRNVPHLALIPLVILWFGI). Residues 123 to 125 (DES) lie on the Cytoplasmic side of the membrane. A helical membrane pass occupies residues 126-148 (AKIFLVALGTLFPIYINTWHGIR). The Periplasmic portion of the chain corresponds to 149 to 164 (NIDRGLVEMARSYGLS). Residues 165-185 (GIPLFIHVILPGALPSIMVGV) form a helical membrane-spanning segment. At 186–187 (RF) the chain is on the cytoplasmic side. The chain crosses the membrane as a helical span at residues 188-208 (ALGLMWLTLIVAETISANSGI). Topologically, residues 209 to 217 (GYLAMNARE) are periplasmic. Residues 218–238 (FLQTDVVVVAIILYALLGKLA) traverse the membrane as a helical segment. The Cytoplasmic portion of the chain corresponds to 239-263 (DVSAQLLERLWLRWNPAYHLKEATV).

Belongs to the binding-protein-dependent transport system permease family. CysTW subfamily.

It localises to the cell inner membrane. In terms of biological role, part of a binding-protein-dependent transport system for aliphatic sulfonates. Probably responsible for the translocation of the substrate across the membrane. This Escherichia coli (strain K12) protein is Putative aliphatic sulfonates transport permease protein SsuC (ssuC).